Reading from the N-terminus, the 317-residue chain is tRNA(Ile)-lysidine synthase (317 aa).

30-35 (SGGSDS) serves as a coordination point for ATP.

Belongs to the tRNA(Ile)-lysidine synthase family.

The protein resides in the cytoplasm. It carries out the reaction cytidine(34) in tRNA(Ile2) + L-lysine + ATP = lysidine(34) in tRNA(Ile2) + AMP + diphosphate + H(+). Its function is as follows. Ligates lysine onto the cytidine present at position 34 of the AUA codon-specific tRNA(Ile) that contains the anticodon CAU, in an ATP-dependent manner. Cytidine is converted to lysidine, thus changing the amino acid specificity of the tRNA from methionine to isoleucine. The sequence is that of tRNA(Ile)-lysidine synthase from Chlamydia abortus (strain DSM 27085 / S26/3) (Chlamydophila abortus).